A 305-amino-acid polypeptide reads, in one-letter code: Major fimbrium anchoring subunit FimB (305 aa).

An N-terminal signal peptide occupies residues 1–22; sequence MNDAKKYIVSVLILLVAGMFGG. Residue Cys23 is the site of N-palmitoyl cysteine attachment. Cys23 carries S-diacylglycerol cysteine lipidation.

This sequence belongs to the bacteroidetes fimbrillin superfamily. FimB/Mfa2 family. In terms of assembly, fimB is not part of the fimbrium itself, but anchors the fimbrium in the outer membrane. Linear, head-to-tail oligomerization of fimbrial subunits mediates assembly of the fimbrium stalk, while the minor components FimC, FimD and FimE probably form the fimbrium tip. The anchoring subunit FimB limits fimbrium length and is important for solid fimbrium attachment to the outer membrane. In its absence, the major fimbriae become very long and are easily detached from the membrane.

The protein localises to the cell outer membrane. Anchoring subunit of the major fimbriae. Regulates fimbrial length. These filamentous pili are attached to the cell surface; they mediate biofilm formation, adhesion onto host cells and onto other bacteria that are part of the oral microbiome. Fimbriae of P.gingivalis are major virulence factors. The protein is Major fimbrium anchoring subunit FimB of Porphyromonas gingivalis (Bacteroides gingivalis).